Reading from the N-terminus, the 287-residue chain is PsbP domain-containing protein 1, chloroplastic (287 aa).

The protein belongs to the PsbP family. In terms of assembly, partially associated with photosystem I (PSI) complex, but is not a subunit of the complex. Interacts with PsaA and PsaB, but not with PasF.

It is found in the plastid. It localises to the chloroplast thylakoid lumen. Functionally, photosystem I assembly factor that assists the proper folding and integration of PsaB and PsaA into the thylakoid membrane. This is PsbP domain-containing protein 1, chloroplastic (PPD1) from Arabidopsis thaliana (Mouse-ear cress).